Here is a 65-residue protein sequence, read N- to C-terminus: Conotoxin Cal16.1 (65 aa).

The signal sequence occupies residues 1–19 (MRCLSIFVLLVLLVSFAVA). The propeptide occupies 20 to 48 (ELDVEGEIVKQLLTRGTLKDADFWKRLEM). Gln49 bears the Pyrrolidone carboxylic acid mark. 2 cysteine pairs are disulfide-bonded: Cys51-Cys60 and Cys53-Cys61. Glu63 bears the Glutamic acid 1-amide mark.

Expressed by the venom duct.

Its subcellular location is the secreted. Probable neurotoxin with unknown target. Possibly targets ion channels. This Californiconus californicus (California cone) protein is Conotoxin Cal16.1.